Reading from the N-terminus, the 369-residue chain is Tryptophan 2,3-dioxygenase 2 (369 aa).

Residues 36–40 and R107 each bind substrate; that span reads FIVVH. H303 is a binding site for heme. T317 contributes to the substrate binding site.

This sequence belongs to the tryptophan 2,3-dioxygenase family. Homotetramer. The cofactor is heme.

It carries out the reaction L-tryptophan + O2 = N-formyl-L-kynurenine. It functions in the pathway amino-acid degradation; L-tryptophan degradation via kynurenine pathway; L-kynurenine from L-tryptophan: step 1/2. In terms of biological role, heme-dependent dioxygenase that catalyzes the oxidative cleavage of the L-tryptophan (L-Trp) pyrrole ring and converts L-tryptophan to N-formyl-L-kynurenine. Catalyzes the oxidative cleavage of the indole moiety. This is Tryptophan 2,3-dioxygenase 2 from Ralstonia nicotianae (strain ATCC BAA-1114 / GMI1000) (Ralstonia solanacearum).